The sequence spans 142 residues: uncharacterized protein (142 aa).

The interval 1 to 31 (MSLPKKKKPEVEEEEKPEEEEEKEEEQEIDI) is disordered. Over residues 11-29 (VEEEEKPEEEEEKEEEQEI) the composition is skewed to acidic residues.

This is an uncharacterized protein from Acidianus sp. F28 (AFV-2).